The following is a 245-amino-acid chain: Chromosome partition protein MukE (245 aa).

The interval 213 to 245 is disordered; it reads PESIAAEKATADDESAVSNEEDFEYDDNQEGAE. Residues 224 to 245 show a composition bias toward acidic residues; sequence DDESAVSNEEDFEYDDNQEGAE.

This sequence belongs to the MukE family. In terms of assembly, interacts, and probably forms a ternary complex, with MukF and MukB. The complex formation is stimulated by calcium or magnesium.

The protein localises to the cytoplasm. Its subcellular location is the nucleoid. In terms of biological role, involved in chromosome condensation, segregation and cell cycle progression. May participate in facilitating chromosome segregation by condensation DNA from both sides of a centrally located replisome during cell division. Probably acts via its interaction with MukB and MukF. The polypeptide is Chromosome partition protein MukE (Actinobacillus succinogenes (strain ATCC 55618 / DSM 22257 / CCUG 43843 / 130Z)).